The primary structure comprises 335 residues: 1D-myo-inositol 2-acetamido-2-deoxy-alpha-D-glucopyranoside deacetylase (335 aa).

Zn(2+)-binding residues include His19, Asp22, and His158.

The protein belongs to the MshB deacetylase family. Zn(2+) serves as cofactor.

It carries out the reaction 1D-myo-inositol 2-acetamido-2-deoxy-alpha-D-glucopyranoside + H2O = 1D-myo-inositol 2-amino-2-deoxy-alpha-D-glucopyranoside + acetate. In terms of biological role, catalyzes the deacetylation of 1D-myo-inositol 2-acetamido-2-deoxy-alpha-D-glucopyranoside (GlcNAc-Ins) in the mycothiol biosynthesis pathway. This Corynebacterium urealyticum (strain ATCC 43042 / DSM 7109) protein is 1D-myo-inositol 2-acetamido-2-deoxy-alpha-D-glucopyranoside deacetylase.